The following is a 289-amino-acid chain: Bis(5'-nucleosyl)-tetraphosphatase, symmetrical (289 aa).

The protein belongs to the Ap4A hydrolase family.

The catalysed reaction is P(1),P(4)-bis(5'-adenosyl) tetraphosphate + H2O = 2 ADP + 2 H(+). In terms of biological role, hydrolyzes diadenosine 5',5'''-P1,P4-tetraphosphate to yield ADP. The sequence is that of Bis(5'-nucleosyl)-tetraphosphatase, symmetrical from Yersinia pseudotuberculosis serotype O:3 (strain YPIII).